A 23-amino-acid chain; its full sequence is Paralytic peptide 1 (23 aa).

Residues Cys7 and Cys19 are joined by a disulfide bond.

The protein belongs to the GBP/PSP1/paralytic peptide family. Hemolymph.

Functionally, causes rapid, rigid paralysis when injected into Lepidopteran larvae. The physiological role may be to reduce hemolymph loss following injury and promote wound healing. The sequence is that of Paralytic peptide 1 from Spodoptera exigua (Beet armyworm).